Consider the following 360-residue polypeptide: Peptide chain release factor 1 (360 aa).

An N5-methylglutamine modification is found at Gln-235.

Belongs to the prokaryotic/mitochondrial release factor family. In terms of processing, methylated by PrmC. Methylation increases the termination efficiency of RF1.

It localises to the cytoplasm. Functionally, peptide chain release factor 1 directs the termination of translation in response to the peptide chain termination codons UAG and UAA. In Mannheimia succiniciproducens (strain KCTC 0769BP / MBEL55E), this protein is Peptide chain release factor 1.